The sequence spans 194 residues: NADH-quinone oxidoreductase subunit B (194 aa).

[4Fe-4S] cluster is bound by residues Cys-73, Cys-74, Cys-138, and Cys-168.

The protein belongs to the complex I 20 kDa subunit family. In terms of assembly, NDH-1 is composed of 14 different subunits. Subunits NuoB, C, D, E, F, and G constitute the peripheral sector of the complex. [4Fe-4S] cluster serves as cofactor.

It is found in the cell inner membrane. The catalysed reaction is a quinone + NADH + 5 H(+)(in) = a quinol + NAD(+) + 4 H(+)(out). Its function is as follows. NDH-1 shuttles electrons from NADH, via FMN and iron-sulfur (Fe-S) centers, to quinones in the respiratory chain. The immediate electron acceptor for the enzyme in this species is believed to be ubiquinone. Couples the redox reaction to proton translocation (for every two electrons transferred, four hydrogen ions are translocated across the cytoplasmic membrane), and thus conserves the redox energy in a proton gradient. The chain is NADH-quinone oxidoreductase subunit B from Bradyrhizobium sp. (strain BTAi1 / ATCC BAA-1182).